The following is a 397-amino-acid chain: Ribosomal RNA large subunit methyltransferase I (397 aa).

Residues 2-80 (AIRIKLKPGR…KEEAIDADFF (79 aa)) enclose the PUA domain.

It belongs to the methyltransferase superfamily. RlmI family.

The protein localises to the cytoplasm. The catalysed reaction is cytidine(1962) in 23S rRNA + S-adenosyl-L-methionine = 5-methylcytidine(1962) in 23S rRNA + S-adenosyl-L-homocysteine + H(+). Specifically methylates the cytosine at position 1962 (m5C1962) of 23S rRNA. The sequence is that of Ribosomal RNA large subunit methyltransferase I from Shewanella denitrificans (strain OS217 / ATCC BAA-1090 / DSM 15013).